The sequence spans 477 residues: Sensor protein kinase PmrB (477 aa).

2 consecutive transmembrane segments (helical) span residues 13 to 33 and 161 to 181; these read LLVNLLVGFVLCWLSVAALTY and LLLFYSLFPLLLALPLLGGLV. Positions 186–238 constitute an HAMP domain; the sequence is ARGLAPLREVQAEVQQRSARHLQPIAVEAVPLEIRGLIDELNLLLERLRTALE. Residues 246–459 enclose the Histidine kinase domain; the sequence is DAAHEIRTPL…EVQVFLPKTQ (214 aa). The residue at position 249 (His-249) is a Phosphohistidine; by autocatalysis. Residues 455-477 are disordered; sequence LPKTQPDATRPPARGPDSGRSHI.

The protein resides in the membrane. The catalysed reaction is ATP + protein L-histidine = ADP + protein N-phospho-L-histidine.. Its function is as follows. Member of the two-component regulatory system PmrA/PmrB that plays a role in the regulation of resistance towards polymyxin B and cationic antimicrobial peptides in response to limiting concentrations of Mg(2+). Also autoregulates its own pmrAB operon under Mg(2+)-limiting conditions. May function as a membrane-associated protein kinase that phosphorylates PmrA in response to environmental signals leading to activation of specific gene promoters. This Pseudomonas aeruginosa (strain ATCC 15692 / DSM 22644 / CIP 104116 / JCM 14847 / LMG 12228 / 1C / PRS 101 / PAO1) protein is Sensor protein kinase PmrB (pmrB).